The primary structure comprises 1173 residues: Rac guanine nucleotide exchange factor JJ (1173 aa).

Disordered stretches follow at residues Met-1–Gln-380, Lys-458–Met-479, and Asp-712–Gln-765. Low complexity-rich tracts occupy residues Gln-8–Gln-23 and Gln-35–Pro-45. The span at Thr-50–Gly-62 shows a compositional bias: polar residues. 2 stretches are compositionally biased toward low complexity: residues Thr-72–Gln-82 and Gln-98–Tyr-118. Polar residues predominate over residues Ser-119–Tyr-133. 3 stretches are compositionally biased toward low complexity: residues Thr-134–Thr-143, Ser-153–Asn-191, and Ser-208–Ser-219. The span at Tyr-220–Gln-239 shows a compositional bias: polar residues. Residues Pro-240–Thr-258 show a composition bias toward low complexity. The segment covering Ser-262–Ile-277 has biased composition (basic and acidic residues). Residues Thr-280–Asn-295 show a composition bias toward polar residues. A compositionally biased stretch (low complexity) spans Gln-296–Gln-380. Residues Lys-470 to Met-479 show a composition bias toward basic and acidic residues. Residues Gln-743–Gln-765 show a composition bias toward low complexity. An IQ domain is found at Arg-793–Leu-822. The DH domain maps to Asn-833 to Arg-1016. The PH domain maps to Arg-1044–Lys-1146.

GTPase-activating protein. The sequence is that of Rac guanine nucleotide exchange factor JJ (gxcJJ) from Dictyostelium discoideum (Social amoeba).